The following is a 93-amino-acid chain: Small ribosomal subunit protein uS19 (93 aa).

Belongs to the universal ribosomal protein uS19 family.

In terms of biological role, protein S19 forms a complex with S13 that binds strongly to the 16S ribosomal RNA. This is Small ribosomal subunit protein uS19 from Lacticaseibacillus paracasei (strain ATCC 334 / BCRC 17002 / CCUG 31169 / CIP 107868 / KCTC 3260 / NRRL B-441) (Lactobacillus paracasei).